Consider the following 275-residue polypeptide: Nitrogenase iron protein 1 (275 aa).

Residue 9 to 16 (GKGGIGKS) participates in ATP binding. Cys-97 is a [4Fe-4S] cluster binding site. Arg-100 bears the ADP-ribosylarginine; by dinitrogenase reductase ADP-ribosyltransferase mark. Cys-132 lines the [4Fe-4S] cluster pocket.

Belongs to the NifH/BchL/ChlL family. Homodimer. [4Fe-4S] cluster is required as a cofactor. Post-translationally, the reversible ADP-ribosylation of Arg-100 inactivates the nitrogenase reductase and regulates nitrogenase activity.

The enzyme catalyses N2 + 8 reduced [2Fe-2S]-[ferredoxin] + 16 ATP + 16 H2O = H2 + 8 oxidized [2Fe-2S]-[ferredoxin] + 2 NH4(+) + 16 ADP + 16 phosphate + 6 H(+). In terms of biological role, the key enzymatic reactions in nitrogen fixation are catalyzed by the nitrogenase complex, which has 2 components: the iron protein and the molybdenum-iron protein. This chain is Nitrogenase iron protein 1 (nifH1), found in Methanothermobacter marburgensis (strain ATCC BAA-927 / DSM 2133 / JCM 14651 / NBRC 100331 / OCM 82 / Marburg) (Methanobacterium thermoautotrophicum).